Consider the following 209-residue polypeptide: Uridine kinase (209 aa).

12–19 (GGSGGGKT) is a binding site for ATP.

Belongs to the uridine kinase family.

It is found in the cytoplasm. It catalyses the reaction uridine + ATP = UMP + ADP + H(+). The enzyme catalyses cytidine + ATP = CMP + ADP + H(+). The protein operates within pyrimidine metabolism; CTP biosynthesis via salvage pathway; CTP from cytidine: step 1/3. It participates in pyrimidine metabolism; UMP biosynthesis via salvage pathway; UMP from uridine: step 1/1. The chain is Uridine kinase from Streptococcus agalactiae serotype III (strain NEM316).